Consider the following 94-residue polypeptide: Small ribosomal subunit protein bS18 (94 aa).

Positions Met1 to Glu12 are enriched in low complexity. Positions Met1–Lys29 are disordered. Positions Arg16–Lys29 are enriched in basic residues.

It belongs to the bacterial ribosomal protein bS18 family. Part of the 30S ribosomal subunit. Forms a tight heterodimer with protein bS6.

Binds as a heterodimer with protein bS6 to the central domain of the 16S rRNA, where it helps stabilize the platform of the 30S subunit. In Leuconostoc citreum (strain KM20), this protein is Small ribosomal subunit protein bS18.